We begin with the raw amino-acid sequence, 626 residues long: Phosphoenolpyruvate carboxykinase (ATP) 2 (626 aa).

Disordered regions lie at residues 1–23 and 64–86; these read MASP…APVN and PNLV…KHQQ. 324–331 contacts ATP; it reads GLSGTGKT.

Belongs to the phosphoenolpyruvate carboxykinase (ATP) family. Homohexamer.

It localises to the cytoplasm. It catalyses the reaction oxaloacetate + ATP = phosphoenolpyruvate + ADP + CO2. Its pathway is carbohydrate biosynthesis; gluconeogenesis. This Urochloa panicoides (Panic liverseed grass) protein is Phosphoenolpyruvate carboxykinase (ATP) 2 (PCK2).